The chain runs to 54 residues: MAATDVRPKITMACQVCKHRNYITRKNRRNDPDRLELKKFCPNCGKHTEHRETR.

This sequence belongs to the bacterial ribosomal protein bL33 family.

This is Large ribosomal subunit protein bL33 from Frankia alni (strain DSM 45986 / CECT 9034 / ACN14a).